A 489-amino-acid polypeptide reads, in one-letter code: Betaine aldehyde dehydrogenase (489 aa).

Residues T26 and D93 each coordinate K(+). 150–152 (GAW) lines the NAD(+) pocket. Catalysis depends on K162, which acts as the Charge relay system. 176-179 (KPSE) contacts NAD(+). V180 is a K(+) binding site. 229–232 (GVET) contributes to the NAD(+) binding site. Residue L245 coordinates K(+). E251 (proton acceptor) is an active-site residue. G253, C285, and E386 together coordinate NAD(+). Catalysis depends on C285, which acts as the Nucleophile. C285 carries the cysteine sulfenic acid (-SOH) modification. K(+) is bound by residues K456 and G459. Residue E463 is the Charge relay system of the active site.

The protein belongs to the aldehyde dehydrogenase family. In terms of assembly, dimer of dimers. K(+) is required as a cofactor.

It catalyses the reaction betaine aldehyde + NAD(+) + H2O = glycine betaine + NADH + 2 H(+). It functions in the pathway amine and polyamine biosynthesis; betaine biosynthesis via choline pathway; betaine from betaine aldehyde: step 1/1. In terms of biological role, involved in the biosynthesis of the osmoprotectant glycine betaine. Catalyzes the irreversible oxidation of betaine aldehyde to the corresponding acid. The sequence is that of Betaine aldehyde dehydrogenase from Burkholderia mallei (strain SAVP1).